Reading from the N-terminus, the 121-residue chain is Small ribosomal subunit protein uS13 (121 aa).

Residues 91-121 (HRRGLPVRGQKTKNNARTRKGPVKTVANKKK) form a disordered region.

This sequence belongs to the universal ribosomal protein uS13 family. As to quaternary structure, part of the 30S ribosomal subunit. Forms a loose heterodimer with protein S19. Forms two bridges to the 50S subunit in the 70S ribosome.

Functionally, located at the top of the head of the 30S subunit, it contacts several helices of the 16S rRNA. In the 70S ribosome it contacts the 23S rRNA (bridge B1a) and protein L5 of the 50S subunit (bridge B1b), connecting the 2 subunits; these bridges are implicated in subunit movement. Contacts the tRNAs in the A and P-sites. The sequence is that of Small ribosomal subunit protein uS13 from Staphylococcus aureus (strain Mu3 / ATCC 700698).